The chain runs to 428 residues: Trigger factor (428 aa).

The 86-residue stretch at Gly-163–Pro-248 folds into the PPIase FKBP-type domain.

Belongs to the FKBP-type PPIase family. Tig subfamily.

The protein resides in the cytoplasm. The catalysed reaction is [protein]-peptidylproline (omega=180) = [protein]-peptidylproline (omega=0). In terms of biological role, involved in protein export. Acts as a chaperone by maintaining the newly synthesized protein in an open conformation. Functions as a peptidyl-prolyl cis-trans isomerase. In Alkaliphilus metalliredigens (strain QYMF), this protein is Trigger factor.